Consider the following 277-residue polypeptide: Large ribosomal subunit protein uL2 (277 aa).

A disordered region spans residues 216–277 (RRPHNRGVAM…IIRRRKVGKG (62 aa)).

The protein belongs to the universal ribosomal protein uL2 family. In terms of assembly, part of the 50S ribosomal subunit. Forms a bridge to the 30S subunit in the 70S ribosome.

One of the primary rRNA binding proteins. Required for association of the 30S and 50S subunits to form the 70S ribosome, for tRNA binding and peptide bond formation. It has been suggested to have peptidyltransferase activity; this is somewhat controversial. Makes several contacts with the 16S rRNA in the 70S ribosome. This Acidiphilium cryptum (strain JF-5) protein is Large ribosomal subunit protein uL2.